A 1031-amino-acid chain; its full sequence is Protein translocase subunit SecA (1031 aa).

Residues glutamine 143, 161-165 (GEGKT), and aspartate 661 each bind ATP. Basic and acidic residues predominate over residues 963-973 (KERLVAKHEES). Positions 963-1031 (KERLVAKHEE…GKKYKNCCGR (69 aa)) are disordered. Zn(2+) contacts are provided by cysteine 1017, cysteine 1019, cysteine 1028, and cysteine 1029.

This sequence belongs to the SecA family. In terms of assembly, monomer and homodimer. Part of the essential Sec protein translocation apparatus which comprises SecA, SecYEG and auxiliary proteins SecDF. Other proteins may also be involved. Requires Zn(2+) as cofactor.

Its subcellular location is the cell inner membrane. The protein localises to the cytoplasm. The catalysed reaction is ATP + H2O + cellular proteinSide 1 = ADP + phosphate + cellular proteinSide 2.. Its function is as follows. Part of the Sec protein translocase complex. Interacts with the SecYEG preprotein conducting channel. Has a central role in coupling the hydrolysis of ATP to the transfer of proteins into and across the cell membrane, serving as an ATP-driven molecular motor driving the stepwise translocation of polypeptide chains across the membrane. The protein is Protein translocase subunit SecA of Prosthecochloris aestuarii (strain DSM 271 / SK 413).